The chain runs to 366 residues: DNA repair protein RAD51 homolog 3 (366 aa).

The required for Holliday junction resolution activity stretch occupies residues 1–117 (MQRELVSFPL…LMKTTEVCGV (117 aa)). Ser-11 carries the post-translational modification Phosphoserine. The interval 70–127 (SVAGKKYTALELLEQEHTQGFIITFCSALDNILGGGIPLMKTTEVCGVPGVGKTQLCM) is interaction with RAD51B, RAD51D and XRCC3. An ATP-binding site is contributed by 116–123 (GVPGVGKT). The disordered stretch occupies residues 338–366 (RDAAVTASSSQTEGSSNLRKRSREPEEGC). A compositionally biased stretch (polar residues) spans 343 to 354 (TASSSQTEGSSN). A Nuclear localization signal motif is present at residues 356–360 (RKRSR).

Belongs to the RecA family. RAD51 subfamily. As to quaternary structure, part of the RAD51 paralog protein complexes BCDX2 and CX3; the complexes have a ring-like structure arranged into a flat disc around a central channel. The BCDX2 complex consits of RAD51B, RAD51C, RAD51D and XRCC2; the CX3 complex consists of RAD51C and XRCC3. The BCDX2 subcomplex RAD51B:RAD51C interacts with RAD51. Interacts with SWSAP1; involved in homologous recombination repair. Interacts directly with PALB2 which may serve as a scaffold for a HR complex containing PALB2, BRCA2, RAD51C, RAD51 and XRCC3. Interacts with HELQ.

It localises to the nucleus. The protein resides in the cytoplasm. It is found in the perinuclear region. The protein localises to the mitochondrion. In terms of biological role, essential for the homologous recombination (HR) pathway of DNA repair. Involved in the homologous recombination repair (HRR) pathway of double-stranded DNA breaks arising during DNA replication or induced by DNA-damaging agents. Part of the RAD51 paralog protein complexes BCDX2 and CX3 which act at different stages of the BRCA1-BRCA2-dependent HR pathway. Upon DNA damage, BCDX2 seems to act downstream of BRCA2 recruitment and upstream of RAD51 recruitment; CX3 seems to act downstream of RAD51 recruitment; both complexes bind predominantly to the intersection of the four duplex arms of the Holliday junction (HJ) and to junction of replication forks. The BCDX2 complex was originally reported to bind single-stranded DNA, single-stranded gaps in duplex DNA and specifically to nicks in duplex DNA. The BCDX2 subcomplex RAD51B:RAD51C exhibits single-stranded DNA-dependent ATPase activity suggesting an involvement in early stages of the HR pathway. Involved in RAD51 foci formation in response to DNA damage suggesting an involvement in early stages of HR probably in the invasion step. Has an early function in DNA repair in facilitating phosphorylation of the checkpoint kinase CHEK2 and thereby transduction of the damage signal, leading to cell cycle arrest and HR activation. Participates in branch migration and HJ resolution and thus is important for processing HR intermediates late in the DNA repair process; the function may be linked to the CX3 complex. Part of a PALB2-scaffolded HR complex containing BRCA2 and which is thought to play a role in DNA repair by HR. Protects RAD51 from ubiquitin-mediated degradation that is enhanced following DNA damage. Plays a role in regulating mitochondrial DNA copy number under conditions of oxidative stress in the presence of RAD51 and XRCC3. Contributes to DNA cross-link resistance, sister chromatid cohesion and genomic stability. Involved in maintaining centrosome number in mitosis. In Cricetulus griseus (Chinese hamster), this protein is DNA repair protein RAD51 homolog 3 (RAD51C).